Consider the following 199-residue polypeptide: FMN-dependent NADH:quinone oxidoreductase (199 aa).

Residue 17–19 (SYS) coordinates FMN.

The protein belongs to the azoreductase type 1 family. As to quaternary structure, homodimer. FMN serves as cofactor.

It catalyses the reaction 2 a quinone + NADH + H(+) = 2 a 1,4-benzosemiquinone + NAD(+). It carries out the reaction N,N-dimethyl-1,4-phenylenediamine + anthranilate + 2 NAD(+) = 2-(4-dimethylaminophenyl)diazenylbenzoate + 2 NADH + 2 H(+). Functionally, quinone reductase that provides resistance to thiol-specific stress caused by electrophilic quinones. Its function is as follows. Also exhibits azoreductase activity. Catalyzes the reductive cleavage of the azo bond in aromatic azo compounds to the corresponding amines. The chain is FMN-dependent NADH:quinone oxidoreductase from Mycoplasmopsis synoviae (strain 53) (Mycoplasma synoviae).